Consider the following 174-residue polypeptide: FITAAFGIPQISTGDMLRAAIKAGTLLGLEAKKIIDEGGLVRDDIIIGMVKERIAQDDCKNGFLFDGFPRTLAQAEAMVEAGVDLDAVVEIDVPDSVIVDRMSGRRVHLASGRTYHVTYNPPKVEGKDDVTGEDLIQRDDDKEETVKKRLAVYHEQTEVLVDFYSKLEGEHAPK.

The interval 12–41 is NMP; it reads STGDMLRAAIKAGTLLGLEAKKIIDEGGLV. Residues Thr13, Arg18, 39-41, 67-70, and Gln74 contribute to the AMP site; these read GLV and GFPR. The tract at residues 104-141 is LID; it reads GRRVHLASGRTYHVTYNPPKVEGKDDVTGEDLIQRDDD. ATP contacts are provided by residues Arg105 and 114 to 115; that span reads TY. Residues Arg138 and Arg149 each contribute to the AMP site.

The protein belongs to the adenylate kinase family. As to quaternary structure, monomer.

The protein localises to the cytoplasm. It catalyses the reaction AMP + ATP = 2 ADP. The protein operates within purine metabolism; AMP biosynthesis via salvage pathway; AMP from ADP: step 1/1. Functionally, catalyzes the reversible transfer of the terminal phosphate group between ATP and AMP. Plays an important role in cellular energy homeostasis and in adenine nucleotide metabolism. The chain is Adenylate kinase from Neisseria polysaccharea.